A 345-amino-acid polypeptide reads, in one-letter code: Anthranilate phosphoribosyltransferase (345 aa).

Residues Gly86, 89-90 (GD), Thr94, 96-99 (NIST), 114-122 (KHGGRGVSS), and Ser126 each bind 5-phospho-alpha-D-ribose 1-diphosphate. Gly86 provides a ligand contact to anthranilate. Residue Ser98 participates in Mg(2+) binding. Arg172 contacts anthranilate. Residues Asp231 and Glu232 each contribute to the Mg(2+) site.

The protein belongs to the anthranilate phosphoribosyltransferase family. Homodimer. It depends on Mg(2+) as a cofactor.

The catalysed reaction is N-(5-phospho-beta-D-ribosyl)anthranilate + diphosphate = 5-phospho-alpha-D-ribose 1-diphosphate + anthranilate. It participates in amino-acid biosynthesis; L-tryptophan biosynthesis; L-tryptophan from chorismate: step 2/5. Functionally, catalyzes the transfer of the phosphoribosyl group of 5-phosphorylribose-1-pyrophosphate (PRPP) to anthranilate to yield N-(5'-phosphoribosyl)-anthranilate (PRA). This chain is Anthranilate phosphoribosyltransferase, found in Ralstonia pickettii (strain 12J).